The primary structure comprises 304 residues: GS homeobox 2 (304 aa).

The interval 116-151 (AQFCPRVNHAHHHHHPPQHHHHHHQPQQPGSAAAAA) is disordered. Residues 123–140 (NHAHHHHHPPQHHHHHHQ) are compositionally biased toward basic residues. The segment covering 141–151 (PQQPGSAAAAA) has biased composition (low complexity). The homeobox DNA-binding region spans 202-261 (GKRMRTAFTSTQLLELEREFSSNMYLSRLRRIEIATYLNLSEKQVKIWFQNRRVKHKKEG). The segment at 283–304 (RSEDEDSLSPASANDDKEISPL) is disordered.

The protein belongs to the Antp homeobox family.

It localises to the nucleus. It is found in the cytoplasm. Functionally, transcription factor that binds 5'-CNAATTAG-3' DNA sequence and regulates the expression of numerous genes including genes important for brain development. During telencephalic development, causes ventralization of pallial progenitors and, depending on the developmental stage, specifies different neuronal fates. At early stages, necessary and sufficient to correctly specify the ventral lateral ganglionic eminence (LGE) and its major derivatives, the striatal projection neurons. At later stages, may specify LGE progenitors toward dorsal LGE fates, including olfactory bulb interneurons. The chain is GS homeobox 2 (GSX2) from Homo sapiens (Human).